The sequence spans 416 residues: Peroxisomal isocitrate dehydrogenase [NADP] (416 aa).

NADP(+)-binding positions include 77–79 (TIT) and R84. T79 is a binding site for substrate. Substrate contacts are provided by residues 96–102 (SPNGTIR), R111, and R134. A Mn(2+)-binding site is contributed by D253. K261 serves as a coordination point for NADP(+). D276 is a binding site for Mn(2+). Residues 311-316 (GTVTRH) and N329 contribute to the NADP(+) site. A Peroxisomal targeting signal motif is present at residues 414-416 (SRL).

The protein belongs to the isocitrate and isopropylmalate dehydrogenases family. Requires Mg(2+) as cofactor. The cofactor is Mn(2+).

It is found in the peroxisome. The catalysed reaction is D-threo-isocitrate + NADP(+) = 2-oxoglutarate + CO2 + NADPH. May be involved in response to oxidative stresses. In Arabidopsis thaliana (Mouse-ear cress), this protein is Peroxisomal isocitrate dehydrogenase [NADP] (ICDH).